We begin with the raw amino-acid sequence, 96 residues long: Co-chaperonin GroES (96 aa).

Belongs to the GroES chaperonin family. In terms of assembly, heptamer of 7 subunits arranged in a ring. Interacts with the chaperonin GroEL.

The protein resides in the cytoplasm. In terms of biological role, together with the chaperonin GroEL, plays an essential role in assisting protein folding. The GroEL-GroES system forms a nano-cage that allows encapsulation of the non-native substrate proteins and provides a physical environment optimized to promote and accelerate protein folding. GroES binds to the apical surface of the GroEL ring, thereby capping the opening of the GroEL channel. The sequence is that of Co-chaperonin GroES from Nitrosomonas eutropha (strain DSM 101675 / C91 / Nm57).